The sequence spans 307 residues: tRNA pseudouridine synthase B (307 aa).

Asp48 acts as the Nucleophile in catalysis.

It belongs to the pseudouridine synthase TruB family. Type 1 subfamily.

The enzyme catalyses uridine(55) in tRNA = pseudouridine(55) in tRNA. Responsible for synthesis of pseudouridine from uracil-55 in the psi GC loop of transfer RNAs. The chain is tRNA pseudouridine synthase B from Neisseria meningitidis serogroup B (strain ATCC BAA-335 / MC58).